A 504-amino-acid polypeptide reads, in one-letter code: Maturase K (504 aa).

Belongs to the intron maturase 2 family. MatK subfamily.

It localises to the plastid. It is found in the chloroplast. Functionally, usually encoded in the trnK tRNA gene intron. Probably assists in splicing its own and other chloroplast group II introns. This chain is Maturase K, found in Lablab purpureus (Hyacinth bean).